The following is a 62-amino-acid chain: Photosystem II reaction center protein Z (62 aa).

2 helical membrane-spanning segments follow: residues 8–28 (SVFA…VALA) and 41–61 (FSGV…NSFI).

The protein belongs to the PsbZ family. As to quaternary structure, PSII is composed of 1 copy each of membrane proteins PsbA, PsbB, PsbC, PsbD, PsbE, PsbF, PsbH, PsbI, PsbJ, PsbK, PsbL, PsbM, PsbT, PsbY, PsbZ, Psb30/Ycf12, at least 3 peripheral proteins of the oxygen-evolving complex and a large number of cofactors. It forms dimeric complexes.

It localises to the plastid. It is found in the chloroplast thylakoid membrane. May control the interaction of photosystem II (PSII) cores with the light-harvesting antenna, regulates electron flow through the 2 photosystem reaction centers. PSII is a light-driven water plastoquinone oxidoreductase, using light energy to abstract electrons from H(2)O, generating a proton gradient subsequently used for ATP formation. The sequence is that of Photosystem II reaction center protein Z from Cryptomeria japonica (Japanese cedar).